The following is a 96-amino-acid chain: Ubiquitin-like protein NEDD8-like protein 1 (96 aa).

The interval 75–96 is disordered; sequence SQSDNSEKSEKSGKSEKDCILM. Basic and acidic residues predominate over residues 79-96; it reads NSEKSEKSGKSEKDCILM.

It belongs to the ubiquitin family.

The polypeptide is Ubiquitin-like protein NEDD8-like protein 1 (nedd8l1) (Dictyostelium discoideum (Social amoeba)).